Here is a 305-residue protein sequence, read N- to C-terminus: Glutaminase 2 (305 aa).

Substrate contacts are provided by serine 61, asparagine 113, glutamate 158, asparagine 165, tyrosine 189, tyrosine 241, and valine 259.

Belongs to the glutaminase family. In terms of assembly, homotetramer.

The enzyme catalyses L-glutamine + H2O = L-glutamate + NH4(+). The chain is Glutaminase 2 from Clostridium perfringens (strain 13 / Type A).